The following is a 166-amino-acid chain: Interferon gamma (166 aa).

An N-terminal signal peptide occupies residues 1-23 (MNYTTICLAFQLCVIFCSSGYYC). Residue Q24 is modified to Pyrrolidone carboxylic acid. N-linked (GlcNAc...) asparagine glycans are attached at residues N39, N106, and N107.

The protein belongs to the type II (or gamma) interferon family. In terms of assembly, homodimer. Interacts with IFNGR1 (via extracellular domain); this interaction promotes IFNGR1 dimerization.

It is found in the secreted. In terms of biological role, type II interferon produced by immune cells such as T-cells and NK cells that plays crucial roles in antimicrobial, antiviral, and antitumor responses by activating effector immune cells and enhancing antigen presentation. Primarily signals through the JAK-STAT pathway after interaction with its receptor IFNGR1 to affect gene regulation. Upon IFNG binding, IFNGR1 intracellular domain opens out to allow association of downstream signaling components JAK2, JAK1 and STAT1, leading to STAT1 activation, nuclear translocation and transcription of IFNG-regulated genes. Many of the induced genes are transcription factors such as IRF1 that are able to further drive regulation of a next wave of transcription. Plays a role in class I antigen presentation pathway by inducing a replacement of catalytic proteasome subunits with immunoproteasome subunits. In turn, increases the quantity, quality, and repertoire of peptides for class I MHC loading. Increases the efficiency of peptide generation also by inducing the expression of activator PA28 that associates with the proteasome and alters its proteolytic cleavage preference. Up-regulates as well MHC II complexes on the cell surface by promoting expression of several key molecules such as cathepsins B/CTSB, H/CTSH, and L/CTSL. Participates in the regulation of hematopoietic stem cells during development and under homeostatic conditions by affecting their development, quiescence, and differentiation. The chain is Interferon gamma (IFNG) from Mustela putorius furo (European domestic ferret).